A 149-amino-acid chain; its full sequence is Ribosome-binding factor A (149 aa).

The disordered stretch occupies residues 125–149 (FGSADEVLNEDEGATDDTDDTKGKD). Over residues 131 to 143 (VLNEDEGATDDTD) the composition is skewed to acidic residues.

This sequence belongs to the RbfA family. As to quaternary structure, monomer. Binds 30S ribosomal subunits, but not 50S ribosomal subunits or 70S ribosomes.

The protein localises to the cytoplasm. In terms of biological role, one of several proteins that assist in the late maturation steps of the functional core of the 30S ribosomal subunit. Associates with free 30S ribosomal subunits (but not with 30S subunits that are part of 70S ribosomes or polysomes). Required for efficient processing of 16S rRNA. May interact with the 5'-terminal helix region of 16S rRNA. This chain is Ribosome-binding factor A, found in Shewanella sp. (strain W3-18-1).